Here is a 192-residue protein sequence, read N- to C-terminus: Adenylate kinase (192 aa).

12-17 (GSGKTT) is an ATP binding site. An NMP region spans residues 34-63 (STGDLLRAQVASGSELGKTIDSFISKGNLV). Residues T35, R40, 61-63 (NLV), 88-91 (GYPR), and Q95 each bind AMP. Positions 130–136 (GRNRGAD) are LID. R131 contacts ATP. R133 and R145 together coordinate AMP. R173 contributes to the ATP binding site.

This sequence belongs to the adenylate kinase family. As to quaternary structure, monomer.

It localises to the cytoplasm. It carries out the reaction AMP + ATP = 2 ADP. It functions in the pathway purine metabolism; AMP biosynthesis via salvage pathway; AMP from ADP: step 1/1. Catalyzes the reversible transfer of the terminal phosphate group between ATP and AMP. Plays an important role in cellular energy homeostasis and in adenine nucleotide metabolism. The chain is Adenylate kinase from Campylobacter jejuni subsp. doylei (strain ATCC BAA-1458 / RM4099 / 269.97).